The following is a 159-amino-acid chain: Transcriptional repressor NrdR (159 aa).

The segment at 3 to 34 is a zinc-finger region; that stretch reads CPFCGGVENKVMDSRVSRDGNAIRRRRECLAC. One can recognise an ATP-cone domain in the interval 49-139; it reads PTVVKKDGRR…VYRQFRDVND (91 aa).

The protein belongs to the NrdR family. Zn(2+) is required as a cofactor.

Its function is as follows. Negatively regulates transcription of bacterial ribonucleotide reductase nrd genes and operons by binding to NrdR-boxes. The protein is Transcriptional repressor NrdR of Syntrophus aciditrophicus (strain SB).